The following is a 407-amino-acid chain: Imidazolonepropionase (407 aa).

Histidine 68 and histidine 70 together coordinate Fe(3+). Histidine 68 and histidine 70 together coordinate Zn(2+). 4-imidazolone-5-propanoate is bound by residues arginine 77, tyrosine 140, and histidine 173. Position 140 (tyrosine 140) interacts with N-formimidoyl-L-glutamate. Histidine 238 provides a ligand contact to Fe(3+). Histidine 238 serves as a coordination point for Zn(2+). Glutamine 241 is a 4-imidazolone-5-propanoate binding site. Aspartate 313 contacts Fe(3+). Residue aspartate 313 coordinates Zn(2+). N-formimidoyl-L-glutamate contacts are provided by asparagine 315 and glycine 317. Threonine 318 is a binding site for 4-imidazolone-5-propanoate.

The protein belongs to the metallo-dependent hydrolases superfamily. HutI family. Requires Zn(2+) as cofactor. Fe(3+) serves as cofactor.

Its subcellular location is the cytoplasm. The catalysed reaction is 4-imidazolone-5-propanoate + H2O = N-formimidoyl-L-glutamate. The protein operates within amino-acid degradation; L-histidine degradation into L-glutamate; N-formimidoyl-L-glutamate from L-histidine: step 3/3. In terms of biological role, catalyzes the hydrolytic cleavage of the carbon-nitrogen bond in imidazolone-5-propanoate to yield N-formimidoyl-L-glutamate. It is the third step in the universal histidine degradation pathway. This chain is Imidazolonepropionase, found in Burkholderia pseudomallei (strain 1710b).